The chain runs to 148 residues: MGRFISVSFGLLVVFLSLSGTEAAFCCPSGWSAYDQNCYKVFTEEMNWADAEKFCTEQHKGSHLLSLHNIAEADFVLKKTLAMLKDGVIWMGLNDVWNECNWGWTDGAKLDYKAWNEGTNCFVFKIAKNHWSHMDCSSTHNFVCKFRV.

An N-terminal signal peptide occupies residues 1–23; it reads MGRFISVSFGLLVVFLSLSGTEA. Intrachain disulfides connect Cys27-Cys38, Cys55-Cys144, and Cys121-Cys136. The C-type lectin domain maps to 34–145; the sequence is YDQNCYKVFT…CSSTHNFVCK (112 aa).

This sequence belongs to the snaclec family. In terms of assembly, heterodimer; disulfide-linked.

It is found in the secreted. In terms of biological role, interferes with one step of hemostasis (modulation of platelet aggregation, or coagulation cascade, for example). The sequence is that of Snaclec 3 from Daboia siamensis (Eastern Russel's viper).